The primary structure comprises 637 residues: Transcription termination factor FttA (637 aa).

A KHa region spans residues glutamate 4–leucine 71. The interval alanine 72 to proline 139 is KHb. Residues tryptophan 180–alanine 383 are metallo-beta-lactamase N-terminus. Zn(2+) is bound by residues histidine 242, histidine 244, aspartate 246, histidine 247, histidine 329, and aspartate 352. Residues asparagine 384–serine 578 form a beta-Casp region. The metallo-beta-lactamase C-terminus stretch occupies residues glycine 579 to leucine 637. Histidine 604 is a binding site for Zn(2+).

The protein belongs to the metallo-beta-lactamase superfamily. RNA-metabolizing metallo-beta-lactamase-like family. FttA subfamily. In terms of assembly, homodimer. Interacts with RNA polymerase (RNAP), interacts with the Spt4-Spt5 complex. Zn(2+) serves as cofactor.

Terminates transcription on the whole genome. Termination is linked to FttA-mediated RNA cleavage and does not require NTP hydrolysis. Cleaves endonucleolytically at the RNA exit channel of RNA polymerase (RNAP); the 5'-3' exonuclease activity of this protein degrades the nascent RNA released from RNAP. This is Transcription termination factor FttA from Methanosarcina mazei (strain ATCC BAA-159 / DSM 3647 / Goe1 / Go1 / JCM 11833 / OCM 88) (Methanosarcina frisia).